Reading from the N-terminus, the 120-residue chain is Ribonuclease P protein component (120 aa).

It belongs to the RnpA family. In terms of assembly, consists of a catalytic RNA component (M1 or rnpB) and a protein subunit.

The catalysed reaction is Endonucleolytic cleavage of RNA, removing 5'-extranucleotides from tRNA precursor.. RNaseP catalyzes the removal of the 5'-leader sequence from pre-tRNA to produce the mature 5'-terminus. It can also cleave other RNA substrates such as 4.5S RNA. The protein component plays an auxiliary but essential role in vivo by binding to the 5'-leader sequence and broadening the substrate specificity of the ribozyme. In Rickettsia bellii (strain RML369-C), this protein is Ribonuclease P protein component.